We begin with the raw amino-acid sequence, 770 residues long: Signal transducer and activator of transcription 3 (770 aa).

Ala2 is modified (N-acetylalanine). An N6-acetyllysine mark is found at Lys49 and Lys87. An Essential for nuclear import motif is present at residues 150-162; that stretch reads DVRKRVQDLEQKM. Positions 580–670 constitute an SH2 domain; sequence WNEGYIMGFI…DATNILVSPL (91 aa). Residues Lys601, Lys615, and Lys631 each carry the allysine; alternate modification. An N6-acetyllysine; alternate mark is found at Lys601, Lys615, and Lys631. Tyr640 bears the Phosphotyrosine; by TYK2 mark. An Allysine; alternate modification is found at Lys685. The residue at position 685 (Lys685) is an N6-acetyllysine; alternate. Residue Tyr705 is modified to Phosphotyrosine; by FER and PTK6. Lys707 carries the N6-acetyllysine modification. A Phosphothreonine modification is found at Thr714. Ser727 is modified (phosphoserine; by DYRK2, NLK, NEK6, IRAK1, RPS6KA5, ZIPK/DAPK3 and PKC/PRKCE).

The protein belongs to the transcription factor STAT family. Forms a homodimer or a heterodimer with a related family member (at least STAT1). Component of a promoter-binding complex composed of STAT3, NFATC3 and NFATC4; complex formation is enhanced by calcineurin. Interacts with IL31RA, NCOA1, PELP1, SIPAR, SOCS7, STATIP1 and TMF1. Interacts with IL23R in presence of IL23. Interacts (via SH2 domain) with NLK. Interacts with ARL2BP; the interaction is enhanced by LIF and JAK1 expression. Interacts with KPNA4 and KPNA5; KPNA4 may be the primary mediator of nuclear import. Interacts with CAV2; the interaction is increased on insulin-induced tyrosine phosphorylation of CAV2 and leads to STAT3 activation. Interacts with ARL2BP; interaction is enhanced with ARL2. Interacts with NEK6. Binds to CDK9 when activated and nuclear. Interacts with BMX. Interacts with ZIPK/DAPK3. Interacts with PIAS3; the interaction occurs on stimulation by IL6, CNTF or OSM and inhibits the DNA binding activity of STAT3. In prostate cancer cells, interacts with PRKCE and promotes DNA binding activity of STAT3. Interacts with STMN3, antagonizing its microtubule-destabilizing activity. Interacts with the 'Lys-129' acetylated form of BIRC5/survivin. Interacts with FER. Interacts (via SH2 domain) with EIF2AK2/PKR (via the kinase catalytic domain). Interacts with FGFR4. Interacts with INPP5F; the interaction is independent of STAT3 Tyr-705 phosphorylation status. Interacts with OCIAD1. Interacts with OCIAD2. Interacts (unphosphorylated or phosphorylated at Ser-727) with PHB1. Interacts and may form heterodimers with NHLH1. Found in a complex with SLC39A6, SLC39A10 and with the 'Ser-727' phosphorylated form of STAT3 throughout mitosis. Interacts (when acetylated) with EP300 (via bromo domain); interaction takes place following STAT3 acetylation by EP300 and promotes enhanceosome assembly. Interacts (when acetylated) with BRD2 (via bromo domain); interaction promotes STAT3 recruitment to chromatin and T-helper Th17 cell differentiation. Interacts with FAM220A/SIPAR; the interaction occurs in both the nucleus and the cytoplasm, is enhanced by IL6 and promotes STAT3 dephosphorylation. Interacts in both unphosphorylated and phosphorylated forms with FAM220A but interacts preferentially in the phosphorylated form in the nucleus. Interacts with PTPN2; the interaction is promoted by FAM220A and leads to STAT3 dephosphorylation which negatively regulates STAT3 transcriptional activator activity. In terms of processing, activated through tyrosine phosphorylation by BMX. Tyrosine phosphorylated in response to IL6, IL11, CNTF, LIF, KITLG/SCF, CSF1, EGF, PDGF, IFN-alpha, LEP and OSM. Activated KIT promotes phosphorylation on tyrosine residues and subsequent translocation to the nucleus. Tyrosine phosphorylated in response to constitutively activated FGFR1, FGFR2, FGFR3 and FGFR4. Phosphorylated on serine upon DNA damage, probably by ATM or ATR. Serine phosphorylation is important for the formation of stable DNA-binding STAT3 homodimers and maximal transcriptional activity. ARL2BP may participate in keeping the phosphorylated state of STAT3 within the nucleus. Tyrosine phosphorylated upon stimulation with EGF. Upon LPS challenge, phosphorylated within the nucleus by IRAK1. Upon UV-A treatment, phosphorylated on Ser-727 by RPS6KA5. Dephosphorylation on tyrosine residues by PTPN2 negatively regulates IL6/interleukin-6 signaling. Phosphorylation at Tyr-705 by PTK6, isoform M2 of PKM (PKM2) or FER leads to an increase of its transcriptional activity. Phosphorylation at Tyr-705 is increased in the presence of calcineurin. Phosphorylation at Tyr-640 by TYK2 negatively regulates transcriptional activity. Post-translationally, acetylated on lysine residues by EP300/p300, promoting its activation. Acetylation at Lys-49 and Lys-87 by EP300/p300 promotes its activation. Acetylation at Lys-87 by EP300/p300 promotes its association with BRD2 and recruitment to chromatin. Deacetylated at Lys-49 and Lys-87 by HDAC1. Acetylation at Lys-685 by EP300/p300 promotes its homodimerization and activation. Deacetylated at Lys-685 by HDAC3. Acetylated on lysine residues by CREBBP. Deacetylation by LOXL3 leads to disrupt STAT3 dimerization and inhibit STAT3 transcription activity. Oxidation of lysine residues to allysine on STAT3 preferentially takes place on lysine residues that are acetylated. Some lysine residues are oxidized to allysine by LOXL3, leading to disrupt STAT3 dimerization and inhibit STAT3 transcription activity. Oxidation of lysine residues to allysine on STAT3 preferentially takes place on lysine residues that are acetylated. In terms of processing, (Microbial infection) Phosphorylated on Tyr-705 in the presence of S.typhimurium SarA. As to expression, expressed in ventricular cardiomyocytes (at protein level). Expressed in the lung (at protein level). Expressed in the liver, spleen and kidney. Expressed in the liver.

Its subcellular location is the cytoplasm. The protein localises to the nucleus. Functionally, signal transducer and transcription activator that mediates cellular responses to interleukins, KITLG/SCF, LEP and other growth factors. Once activated, recruits coactivators, such as NCOA1 or MED1, to the promoter region of the target gene. May mediate cellular responses to activated FGFR1, FGFR2, FGFR3 and FGFR4. Upon activation of IL6ST/gp130 signaling by interleukin-6 (IL6), binds to the IL6-responsive elements identified in the promoters of various acute-phase protein genes. Activated by IL31 through IL31RA. Acts as a regulator of inflammatory response by regulating differentiation of naive CD4(+) T-cells into T-helper Th17 or regulatory T-cells (Treg): acetylation promotes its transcription activity and cell differentiation while deacetylation and oxidation of lysine residues by LOXL3 inhibits differentiation. Involved in cell cycle regulation by inducing the expression of key genes for the progression from G1 to S phase, such as CCND1. Mediates the effects of LEP on melanocortin production, body energy homeostasis and lactation. May play an apoptotic role by transctivating BIRC5 expression under LEP activation. Cytoplasmic STAT3 represses macroautophagy by inhibiting EIF2AK2/PKR activity. Plays a crucial role in basal beta cell functions, such as regulation of insulin secretion. Following JAK/STAT signaling activation and as part of a complex with NFATC3 and NFATC4, binds to the alpha-beta E4 promoter region of CRYAB and activates transcription in cardiomyocytes. Plays an important role in host defense in methicillin-resistant S.aureus lung infection by regulating the expression of the antimicrobial lectin REG3G. The protein is Signal transducer and activator of transcription 3 of Mus musculus (Mouse).